Here is an 876-residue protein sequence, read N- to C-terminus: ATP-dependent helicase Lhr-Core (876 aa).

Residues Gln37, Lys60, Thr61, Asp175, Glu176, Arg374, and His377 each contribute to the ATP site. The Helicase ATP-binding domain occupies 41-232; it reads IPLIKKGKNV…FLVGGNGDYE (192 aa). The short motif at 175–178 is the DEAH box element; sequence DEIH. One can recognise a Helicase C-terminal domain in the interval 249–421; that stretch reads PVKDLVHATE…NIHVPENPLD (173 aa). A WH domain region spans residues 422–506; it reads VLTQLIVAAS…IFFLNSGTIP (85 aa). The interval 507-876 is domain 4; that stretch reads DEAMIPVKME…DLEYTEAGIK (370 aa).

It belongs to the Lhr helicase family. Lhr-Core subfamily. In terms of assembly, monomer.

The enzyme catalyses Couples ATP hydrolysis with the unwinding of duplex DNA by translocating in the 3'-5' direction.. It carries out the reaction ATP + H2O = ADP + phosphate + H(+). In terms of biological role, probably part of a 4-gene DNA damage response locus in which the upstream ups system, in combination with this downstream locus, functions in homologous recombination to rescue Sulfolobales from DNA-damaging threats. DNA helicase that translocates in a 3'-5' direction on single-stranded (ss)DNA. Binds Holliday junction (HJ) DNA, Y-shaped DNA, DNA with a 3'-overhang and single-stranded (ss)DNA with high affinity; binds double-stranded (ds)DNA with less affinity. Has helicase activity on DNA with a 3'-overhang, Y-shaped DNA and HJ DNA. Does not unwind blunt-ended dsDNA or DNA with a 5'-overhang. The protein is ATP-dependent helicase Lhr-Core of Sulfolobus acidocaldarius (strain ATCC 33909 / DSM 639 / JCM 8929 / NBRC 15157 / NCIMB 11770).